Consider the following 198-residue polypeptide: KinB-signaling pathway activation protein (198 aa).

The next 6 helical transmembrane spans lie at F9–K29, A42–I62, L90–F110, L117–I137, T146–L166, and W173–P193.

Its subcellular location is the cell membrane. In terms of biological role, involved in the activation of the KinB signaling pathway of sporulation. In Bacillus subtilis (strain 168), this protein is KinB-signaling pathway activation protein (kbaA).